The chain runs to 149 residues: UPF0336 protein Lxx02810 (149 aa).

The protein belongs to the UPF0336 family.

The sequence is that of UPF0336 protein Lxx02810 from Leifsonia xyli subsp. xyli (strain CTCB07).